The following is a 171-amino-acid chain: CDP-archaeol synthase (171 aa).

4 helical membrane passes run 11–31 (VLYV…GLVF), 65–85 (VGLV…IGVI), 129–149 (LILV…IMLI), and 151–171 (LVLH…DVWY).

It belongs to the CDP-archaeol synthase family. It depends on Mg(2+) as a cofactor.

The protein resides in the cell membrane. It carries out the reaction 2,3-bis-O-(geranylgeranyl)-sn-glycerol 1-phosphate + CTP + H(+) = CDP-2,3-bis-O-(geranylgeranyl)-sn-glycerol + diphosphate. The protein operates within membrane lipid metabolism; glycerophospholipid metabolism. Catalyzes the formation of CDP-2,3-bis-(O-geranylgeranyl)-sn-glycerol (CDP-archaeol) from 2,3-bis-(O-geranylgeranyl)-sn-glycerol 1-phosphate (DGGGP) and CTP. This reaction is the third ether-bond-formation step in the biosynthesis of archaeal membrane lipids. The protein is CDP-archaeol synthase of Methanothermobacter thermautotrophicus (strain ATCC 29096 / DSM 1053 / JCM 10044 / NBRC 100330 / Delta H) (Methanobacterium thermoautotrophicum).